The following is a 108-amino-acid chain: Transmembrane protein 141 (108 aa).

The next 2 membrane-spanning stretches (helical) occupy residues 32 to 52 (MKGV…QMFI) and 58 to 78 (YPLQ…SYGV).

This sequence belongs to the TMEM141 family.

The protein resides in the membrane. The sequence is that of Transmembrane protein 141 (TMEM141) from Homo sapiens (Human).